A 213-amino-acid polypeptide reads, in one-letter code: Large ribosomal subunit protein uL3 (213 aa).

Gln151 carries the post-translational modification N5-methylglutamine.

It belongs to the universal ribosomal protein uL3 family. As to quaternary structure, part of the 50S ribosomal subunit. Forms a cluster with proteins L14 and L19. Post-translationally, methylated by PrmB.

Its function is as follows. One of the primary rRNA binding proteins, it binds directly near the 3'-end of the 23S rRNA, where it nucleates assembly of the 50S subunit. The protein is Large ribosomal subunit protein uL3 of Rhizobium johnstonii (strain DSM 114642 / LMG 32736 / 3841) (Rhizobium leguminosarum bv. viciae).